The sequence spans 719 residues: Glutathionylspermidine synthase (719 aa).

A Peptidase C51 domain is found at 54–200 (CLPLSSFERK…TESGEVELLD (147 aa)). Arg350 provides a ligand contact to glutathione. Position 350 to 352 (350 to 352 (RFD)) interacts with ATP. Positions 352, 364, and 366 each coordinate Mg(2+). Ser369 provides a ligand contact to glutathione. Position 432 (Glu432) interacts with spermidine. The glutathione site is built by Glu433 and Thr501. Residues Lys544, Lys579, Gly586, Gln653, and 689-691 (KIT) each bind ATP.

In the C-terminal section; belongs to the glutathionylspermidine synthase preATP-grasp family. Requires Mg(2+) as cofactor. The N-terminus is blocked.

The enzyme catalyses spermidine + glutathione + ATP = glutathionylspermidine + ADP + phosphate + H(+). In terms of biological role, conjugates glutathione (gamma-Glu-Cys-Gly) and spermidine to form glutathionylspermidine in the biosynthesis trypanothione (N(1),N(8)-bis(glutathionyl)spermidine), which is involved in maintaining intracellular thiol redox and in defense against oxidants. This is Glutathionylspermidine synthase (GSP) from Crithidia fasciculata.